A 451-amino-acid chain; its full sequence is Rab GDP-dissociation inhibitor (451 aa).

Interaction with YPT1 stretches follow at residues 106–112 (RYVDFKQ) and 234–259 (YPMY…TYML).

It belongs to the Rab GDI family. Interacts with the GDP-bound form of Rab GTPase YPT1. Interacts with YPT10.

It localises to the cytoplasm. Functionally, regulates the GDP/GTP exchange reaction of SEC4 by inhibiting the dissociation of GDP from it, and the subsequent binding of GTP to SEC4. Plays an essential role in the yeast secretory pathway. Extracts GDP-bound YPT7 from vacuolar membranes, antagonizing vacuolar membrane fusion. The protein is Rab GDP-dissociation inhibitor (GDI1) of Saccharomyces cerevisiae (strain ATCC 204508 / S288c) (Baker's yeast).